The sequence spans 161 residues: Regulatory protein RecX (161 aa).

Belongs to the RecX family.

The protein resides in the cytoplasm. In terms of biological role, modulates RecA activity. In Thermotoga petrophila (strain ATCC BAA-488 / DSM 13995 / JCM 10881 / RKU-1), this protein is Regulatory protein RecX.